We begin with the raw amino-acid sequence, 276 residues long: Elongation factor Ts (276 aa).

Positions 79–82 (TDFV) are involved in Mg(2+) ion dislocation from EF-Tu.

It belongs to the EF-Ts family.

It is found in the cytoplasm. Its function is as follows. Associates with the EF-Tu.GDP complex and induces the exchange of GDP to GTP. It remains bound to the aminoacyl-tRNA.EF-Tu.GTP complex up to the GTP hydrolysis stage on the ribosome. This Buchnera aphidicola subsp. Cinara cedri (strain Cc) protein is Elongation factor Ts.